Here is a 130-residue protein sequence, read N- to C-terminus: Small ribosomal subunit protein uS9 (130 aa).

The tract at residues 111 to 130 (VERKKVGLRKARRRPQFSKR) is disordered. Over residues 116–130 (VGLRKARRRPQFSKR) the composition is skewed to basic residues.

The protein belongs to the universal ribosomal protein uS9 family.

The sequence is that of Small ribosomal subunit protein uS9 from Enterobacter sp. (strain 638).